Reading from the N-terminus, the 186-residue chain is MINLVEKEWQEHQKIAQESEILKGQIAKAGELLCECLKKGGKILICGNGGSAADAQHFAAELSGRYKKERKALAGIALTTDTSALSAIGNDYGFEFVFSRQVEALGNENDVLIGISTSGKSPNVLEAFKKAKELNMLCLGLSGKGGGMMNKLCDHNLVVPSDDTARIQEMHILIIHTLCQIIDEGF.

The SIS domain maps to 33–186; it reads LCECLKKGGK…TLCQIIDEGF (154 aa). 48–50 contacts substrate; it reads NGG. Residues His-57 and Glu-61 each contribute to the Zn(2+) site. Residues Glu-61, 90–91, 116–118, Ser-121, and Gln-168 each bind substrate; these read ND and STS. Gln-168 and His-176 together coordinate Zn(2+).

It belongs to the SIS family. GmhA subfamily. Homotetramer. Requires Zn(2+) as cofactor.

The protein localises to the cytoplasm. It carries out the reaction 2 D-sedoheptulose 7-phosphate = D-glycero-alpha-D-manno-heptose 7-phosphate + D-glycero-beta-D-manno-heptose 7-phosphate. The protein operates within carbohydrate biosynthesis; D-glycero-D-manno-heptose 7-phosphate biosynthesis; D-glycero-alpha-D-manno-heptose 7-phosphate and D-glycero-beta-D-manno-heptose 7-phosphate from sedoheptulose 7-phosphate: step 1/1. Catalyzes the isomerization of sedoheptulose 7-phosphate in D-glycero-D-manno-heptose 7-phosphate. The protein is Phosphoheptose isomerase of Campylobacter jejuni subsp. jejuni serotype O:6 (strain 81116 / NCTC 11828).